A 306-amino-acid chain; its full sequence is Agmatinase (306 aa).

H126, D149, H151, D153, D230, and D232 together coordinate Mn(2+).

This sequence belongs to the arginase family. Agmatinase subfamily. Requires Mn(2+) as cofactor.

The enzyme catalyses agmatine + H2O = urea + putrescine. The protein operates within amine and polyamine biosynthesis; putrescine biosynthesis via agmatine pathway; putrescine from agmatine: step 1/1. Catalyzes the formation of putrescine from agmatine. The polypeptide is Agmatinase (Escherichia coli (strain K12 / DH10B)).